The following is a 1058-amino-acid chain: Isoleucine--tRNA ligase (1058 aa).

The 'HIGH' region signature appears at proline 48 to threonine 58. A 'KMSKS' region motif is present at residues lysine 596 to serine 600. ATP is bound at residue lysine 599.

Belongs to the class-I aminoacyl-tRNA synthetase family. IleS type 2 subfamily. Monomer. Zn(2+) is required as a cofactor.

Its subcellular location is the cytoplasm. It catalyses the reaction tRNA(Ile) + L-isoleucine + ATP = L-isoleucyl-tRNA(Ile) + AMP + diphosphate. Functionally, catalyzes the attachment of isoleucine to tRNA(Ile). As IleRS can inadvertently accommodate and process structurally similar amino acids such as valine, to avoid such errors it has two additional distinct tRNA(Ile)-dependent editing activities. One activity is designated as 'pretransfer' editing and involves the hydrolysis of activated Val-AMP. The other activity is designated 'posttransfer' editing and involves deacylation of mischarged Val-tRNA(Ile). The protein is Isoleucine--tRNA ligase of Methanosarcina mazei (strain ATCC BAA-159 / DSM 3647 / Goe1 / Go1 / JCM 11833 / OCM 88) (Methanosarcina frisia).